The chain runs to 292 residues: Pyridoxal 5'-phosphate synthase subunit PdxS (292 aa).

A D-ribose 5-phosphate-binding site is contributed by D22. Residue K79 is the Schiff-base intermediate with D-ribose 5-phosphate of the active site. Residue G151 coordinates D-ribose 5-phosphate. R163 serves as a coordination point for D-glyceraldehyde 3-phosphate. D-ribose 5-phosphate-binding positions include G212 and 233–234 (GS).

This sequence belongs to the PdxS/SNZ family. As to quaternary structure, in the presence of PdxT, forms a dodecamer of heterodimers.

The enzyme catalyses aldehydo-D-ribose 5-phosphate + D-glyceraldehyde 3-phosphate + L-glutamine = pyridoxal 5'-phosphate + L-glutamate + phosphate + 3 H2O + H(+). The protein operates within cofactor biosynthesis; pyridoxal 5'-phosphate biosynthesis. Its function is as follows. Catalyzes the formation of pyridoxal 5'-phosphate from ribose 5-phosphate (RBP), glyceraldehyde 3-phosphate (G3P) and ammonia. The ammonia is provided by the PdxT subunit. Can also use ribulose 5-phosphate and dihydroxyacetone phosphate as substrates, resulting from enzyme-catalyzed isomerization of RBP and G3P, respectively. This is Pyridoxal 5'-phosphate synthase subunit PdxS from Thermoanaerobacter sp. (strain X514).